A 541-amino-acid polypeptide reads, in one-letter code: tRNA uridine(34) acetyltransferase (541 aa).

The radical S-adenosyl-L-methionine (rSAM) stretch occupies residues 76-336; that stretch reads KPVRTISGVA…GEYKPYREEE (261 aa). The 272-residue stretch at 79–350 folds into the Radical SAM core domain; sequence RTISGVAVVA…ISYAKSIMPK (272 aa). Residues Cys-96, Cys-101, and Cys-104 each coordinate [4Fe-4S] cluster. Acetyl-CoA contacts are provided by residues Lys-156, 467–470, 491–493, and Tyr-524; these read QLHV and YGR. An N-acetyltransferase domain is found at 401–541; that stretch reads VMYKKGIMPD…VGAYMGKYLE (141 aa).

The protein belongs to the ELP3 family. It depends on [4Fe-4S] cluster as a cofactor.

The enzyme catalyses uridine(34) in tRNA + acetyl-CoA + S-adenosyl-L-methionine + H2O = 5-(carboxymethyl)uridine(34) in tRNA + 5'-deoxyadenosine + L-methionine + CoA + 2 H(+). Its pathway is tRNA modification. In terms of biological role, tRNA uridine(34) acetyltransferase, which mediates formation of carboxymethyluridine in the wobble base at position 34 in tRNAs. The proposed mechanism is the following: (i) recruits S-adenosyl-L-methionine and cleaves it to generate a 5'-deoxyadenosine radical (5'-dA) in the radical S-adenosyl-L-methionine (rSAM) region, (ii) hydrolyzes acetyl-CoA in the N-acetyltransferase domain and (iii) an acetyl radical is formed by the products of the two domains and (iv) is transferred onto the C5 position of uridine(34) in the bound tRNA molecule. Does not show protein lysine acetyltransferase activity. In Methanocaldococcus jannaschii (strain ATCC 43067 / DSM 2661 / JAL-1 / JCM 10045 / NBRC 100440) (Methanococcus jannaschii), this protein is tRNA uridine(34) acetyltransferase.